The chain runs to 309 residues: Porphobilinogen deaminase (309 aa).

S-(dipyrrolylmethanemethyl)cysteine is present on Cys-242.

The protein belongs to the HMBS family. As to quaternary structure, monomer. Requires dipyrromethane as cofactor.

It carries out the reaction 4 porphobilinogen + H2O = hydroxymethylbilane + 4 NH4(+). The protein operates within porphyrin-containing compound metabolism; protoporphyrin-IX biosynthesis; coproporphyrinogen-III from 5-aminolevulinate: step 2/4. Functionally, tetrapolymerization of the monopyrrole PBG into the hydroxymethylbilane pre-uroporphyrinogen in several discrete steps. The polypeptide is Porphobilinogen deaminase (Syntrophobacter fumaroxidans (strain DSM 10017 / MPOB)).